We begin with the raw amino-acid sequence, 201 residues long: Small ribosomal subunit protein uS4c (201 aa).

The disordered stretch occupies residues 15 to 43 (LGALPGLTSKRPTPGSDLRNQSRSGKRSQ). Residues 89-149 (MRLDNILFRL…DEQKSRALIQ (61 aa)) enclose the S4 RNA-binding domain.

The protein belongs to the universal ribosomal protein uS4 family. Part of the 30S ribosomal subunit. Contacts protein S5. The interaction surface between S4 and S5 is involved in control of translational fidelity.

It localises to the plastid. The protein localises to the chloroplast. One of the primary rRNA binding proteins, it binds directly to 16S rRNA where it nucleates assembly of the body of the 30S subunit. In terms of biological role, with S5 and S12 plays an important role in translational accuracy. This is Small ribosomal subunit protein uS4c (rps4) from Nandina domestica (Heavenly bamboo).